We begin with the raw amino-acid sequence, 362 residues long: UDP-arabinopyranose mutase 3 (362 aa).

The DXD motif signature appears at 106–108 (DDD). The N-linked (Glc...) arginine glycan is linked to Arg154.

The protein belongs to the RGP family. As to quaternary structure, heterodimer with RGP1. It depends on Mn(2+) as a cofactor. The cofactor is Mg(2+). Reversibly glycosylated in vitro by UDP-glucose, UDP-xylose and UDP-galactose, but not UDP-mannose. Specifically expressed in developing seeds.

The protein resides in the cytoplasm. Its subcellular location is the cytosol. The protein localises to the golgi apparatus. The enzyme catalyses UDP-beta-L-arabinofuranose = UDP-beta-L-arabinopyranose. UDP-L-arabinose mutase involved in the biosynthesis of cell wall non-cellulosic polysaccharides. Catalyzes the interconvertion of UDP-L-arabinopyranose (UDP-Arap) and UDP-L-arabinofuranose (UDP-Araf). Preferentially catalyzes the formation of UDP-Arap from UDP-Araf. At thermodynamic equilibrium in vitro the ratio of the pyranose form over the furanose form is 95:5. Is not active on other UDP-sugars (UDP-Gal, UDP-Xyl, UDP-Glc, GDP-Man and GDP-Fuc). Is probably active as heteromer in vivo. The polypeptide is UDP-arabinopyranose mutase 3 (Arabidopsis thaliana (Mouse-ear cress)).